Reading from the N-terminus, the 511-residue chain is Vesicular acetylcholine transporter (511 aa).

At 1–36 the chain is on the cytoplasmic side; sequence MAVGQAKAAMGKISSAIGERSKRISGAMNEPRRKRK. Residues 37–57 form a helical membrane-spanning segment; the sequence is ILLVIVCIAMLLDNMLYMVIV. Over 58–108 the chain is Lumenal, vesicle; it reads PIIPNYLETIRTYKLVYITTPSNGTNGSLLNSTQRAVLERNPNANEDIQIG. N-linked (GlcNAc...) asparagine glycans are attached at residues asparagine 80, asparagine 83, and asparagine 88. A helical transmembrane segment spans residues 109–129; it reads VLFASKAILQLLSNPFTGTFI. At 130 to 135 the chain is on the cytoplasmic side; that stretch reads DRVGYD. Residues 136–156 form a helical membrane-spanning segment; it reads IPLLIGLTIMFFSTITFAFGE. The Lumenal, vesicle portion of the chain corresponds to 157–165; that stretch reads SYAILFAAR. Residues 166 to 186 traverse the membrane as a helical segment; that stretch reads SLQGLGSAFADTSGIAMIADK. Topologically, residues 187–197 are cytoplasmic; the sequence is YTEESERTQAL. Residues 198 to 218 form a helical membrane-spanning segment; sequence GIALAFISFGSLVAPPFGGVL. Over 219 to 225 the chain is Lumenal, vesicle; it reads YQFAGKW. A helical transmembrane segment spans residues 226–246; sequence VPFLVLSFVCLLDGILLLMVV. The Cytoplasmic portion of the chain corresponds to 247-267; it reads TPFASRTRVNTLQGTPIYKLM. The chain crosses the membrane as a helical span at residues 268–288; the sequence is IDPYIAVVAGALTTCNIPLAF. Residues 289–306 are Lumenal, vesicle-facing; it reads LEPTISNWMKKTMNASEW. The N-linked (GlcNAc...) asparagine glycan is linked to asparagine 302. The chain crosses the membrane as a helical span at residues 307–327; it reads QMGITWLPAFFPHILGVYITV. The Cytoplasmic segment spans residues 328 to 337; the sequence is KLAAKYPNYQ. A helical transmembrane segment spans residues 338-358; the sequence is WLYGAVGLVIIGASSCTIPAC. Residues 359-363 lie on the Lumenal, vesicle side of the membrane; the sequence is RNFEE. The helical transmembrane segment at 364 to 384 threads the bilayer; that stretch reads LIIPLCALCFGIALVDTALLP. The Cytoplasmic portion of the chain corresponds to 385 to 400; it reads TLAFLVDIRYVSVYGS. A helical transmembrane segment spans residues 401–421; that stretch reads VYAIADISYSVAYALGPIMAG. Topologically, residues 422 to 428 are lumenal, vesicle; it reads QIVHDLG. A helical membrane pass occupies residues 429-449; the sequence is FVQLNLGMGLVNILYAPGLLF. The Cytoplasmic portion of the chain corresponds to 450 to 511; that stretch reads LRNVCQMKPS…VLSDQEGYSE (62 aa). Residues 485–511 are disordered; the sequence is EAKEPHGTSSGNHSVHAVLSDQEGYSE.

It belongs to the major facilitator superfamily. Vesicular transporter family. In terms of tissue distribution, high expression in the electric lobe of the brain.

It is found in the membrane. In terms of biological role, involved in acetylcholine transport into synaptic vesicles. The chain is Vesicular acetylcholine transporter from Torpedo marmorata (Marbled electric ray).